The chain runs to 1011 residues: Histone deacetylase 9 (1011 aa).

Position 22 is a phosphoserine (Ser-22). The segment at 23-27 (PLDLR) is interaction with CTBP1. Disordered stretches follow at residues 110-139 (RQEQ…RAVA), 183-249 (TSLD…KDGN), and 262-304 (TESS…EQMV). Residues 136–154 (RAVASTEVKQKLQEFLLSK) are interaction with MEF2. An interaction with MAPK10 region spans residues 175 to 343 (LWYTAAHHTS…LPAVPSQLNA (169 aa)). Polar residues predominate over residues 185–199 (LDQSSPPLSGTSPSY). The span at 208 to 219 (DAKDDFPLRKTA) shows a compositional bias: basic and acidic residues. Positions 218 to 261 (TASEPNLKVRSRLKQKVAERRSSPLLRRKDGNVVTSFKKRMFEV) are interaction with ETV6. 2 positions are modified to phosphoserine: Ser-220 and Ser-240. The segment covering 233-248 (KVAERRSSPLLRRKDG) has biased composition (basic and acidic residues). Positions 262-285 (TESSVSSSSPGSGPSSPNNGPTGS) are enriched in low complexity. The residue at position 451 (Ser-451) is a Phosphoserine. Residues 494–536 (QLKQPGSHLEEAEEELQGDQAMQEDRAPSSGNSTRSDSSACVD) form a disordered region. Positions 522–532 (SSGNSTRSDSS) are enriched in polar residues. A Phosphoserine modification is found at Ser-554. The tract at residues 631–978 (SATGIAYDPL…VNALLGNELE (348 aa)) is histone deacetylase. Zn(2+) is bound by residues Cys-646, Cys-648, His-654, and Cys-731. The active site involves His-783.

This sequence belongs to the histone deacetylase family. HD type 2 subfamily. Homodimer. Interacts with CTBP1. The phosphorylated form interacts with 14-3-3. Interacts with HDAC1 and HDAC3, and probably with HDAC4 and HDAC5. Interacts with MEF2, MAPK10, ETV6, NCOR1 and BCL6. Interacts with FOXP3 in the absence of T-cell stimulation. Phosphorylated on Ser-220 and Ser-450; which promotes 14-3-3-binding, impairs interaction with MEF2, and antagonizes antimyogenic activity. Phosphorylated on Ser-240; which impairs nuclear accumulation. Isoform 7 is phosphorylated on Tyr-1010. Phosphorylated by the PKC kinases PKN1 and PKN2, impairing nuclear import. Post-translationally, sumoylated. As to expression, broadly expressed, with highest levels in brain, heart, muscle and testis. Isoform 3 is present in human bladder carcinoma cells (at protein level).

Its subcellular location is the nucleus. It carries out the reaction N(6)-acetyl-L-lysyl-[histone] + H2O = L-lysyl-[histone] + acetate. With respect to regulation, inhibited by Trichostatin A (TSA) and suberoylanilide hydroxamic acid. Responsible for the deacetylation of lysine residues on the N-terminal part of the core histones (H2A, H2B, H3 and H4). Histone deacetylation gives a tag for epigenetic repression and plays an important role in transcriptional regulation, cell cycle progression and developmental events. Represses MEF2-dependent transcription. In terms of biological role, isoform 3 lacks active site residues and therefore is catalytically inactive. Represses MEF2-dependent transcription by recruiting HDAC1 and/or HDAC3. Seems to inhibit skeletal myogenesis and to be involved in heart development. Protects neurons from apoptosis, both by inhibiting JUN phosphorylation by MAPK10 and by repressing JUN transcription via HDAC1 recruitment to JUN promoter. This is Histone deacetylase 9 (HDAC9) from Homo sapiens (Human).